The chain runs to 788 residues: Spastin (788 aa).

The tract at residues Met-1–Val-105 is disordered. Residues Met-1–Pro-116 lie on the Cytoplasmic side of the membrane. The interval Met-1 to Gly-227 is required for localization to punctate cytoplasmic foci. 2 stretches are compositionally biased toward low complexity: residues Ser-8–Arg-48 and Ala-57–Asp-75. The segment at residues Ile-117 to Tyr-137 is an intramembrane region (helical). At Leu-138–Ile-788 the chain is on the cytoplasmic side. The segment at Gly-227 to Ile-788 is sufficient for interaction with microtubules and microtubule severing. The region spanning His-240 to Leu-315 is the MIT domain. Residues Glu-331–Asp-353 are compositionally biased toward basic and acidic residues. The segment at Glu-331–Pro-484 is disordered. Over residues Ala-387–Ser-400 the composition is skewed to low complexity. 2 stretches are compositionally biased toward polar residues: residues Asn-419–Ser-433 and Gln-453–Ile-469. A required for interaction with microtubules region spans residues Asn-471–Val-485. Gly-553–Thr-560 is a binding site for ATP.

The protein belongs to the AAA ATPase family. Spastin subfamily. In terms of assembly, homohexamer. The homohexamer is stabilized by ATP-binding. The homohexamer may adopt a ring conformation through which microtubules pass prior to being severed. Interacts with microtubules. Interacts with atl; may be involved in microtubule dynamics.

It localises to the membrane. The protein resides in the cytoplasm. The protein localises to the cytoskeleton. It is found in the microtubule organizing center. Its subcellular location is the centrosome. It localises to the chromosome. The protein resides in the lipid droplet. The catalysed reaction is n ATP + n H2O + a microtubule = n ADP + n phosphate + (n+1) alpha/beta tubulin heterodimers.. ATP-dependent microtubule severing protein. Stimulates microtubule minus-end depolymerization and poleward microtubule flux in the mitotic spindle. Regulates microtubule stability in the neuromuscular junction synapse. Involved in lipid metabolism by regulating the size and distribution of lipid droplets. Involved in axon regeneration by regulating microtubule severing. This chain is Spastin, found in Drosophila persimilis (Fruit fly).